We begin with the raw amino-acid sequence, 271 residues long: N-acylmannosamine 1-dehydrogenase (271 aa).

20 to 44 (VTGAAGGIGRATVEAYLREGASVVA) contacts NAD(+). A substrate-binding site is contributed by S153. Y166 serves as the catalytic Proton acceptor.

It belongs to the short-chain dehydrogenases/reductases (SDR) family.

The enzyme catalyses an N-acyl-D-mannosamine + NAD(+) = an N-acyl-D-mannosaminolactone + NADH + H(+). Acts on acetyl-D-mannosamine and glycolyl-D-mannosamine. In Flavobacterium sp. (strain 141-8), this protein is N-acylmannosamine 1-dehydrogenase.